The primary structure comprises 876 residues: Alanine--tRNA ligase (876 aa).

Positions 568, 572, 670, and 674 each coordinate Zn(2+).

It belongs to the class-II aminoacyl-tRNA synthetase family. Requires Zn(2+) as cofactor.

The protein localises to the cytoplasm. The catalysed reaction is tRNA(Ala) + L-alanine + ATP = L-alanyl-tRNA(Ala) + AMP + diphosphate. Catalyzes the attachment of alanine to tRNA(Ala) in a two-step reaction: alanine is first activated by ATP to form Ala-AMP and then transferred to the acceptor end of tRNA(Ala). Also edits incorrectly charged Ser-tRNA(Ala) and Gly-tRNA(Ala) via its editing domain. The polypeptide is Alanine--tRNA ligase (Geotalea uraniireducens (strain Rf4) (Geobacter uraniireducens)).